Reading from the N-terminus, the 42-residue chain is uncharacterized protein (42 aa).

A helical membrane pass occupies residues Val-18–Leu-38.

It localises to the host membrane. This is an uncharacterized protein from His1 virus (isolate Australia/Victoria) (His1V).